The following is a 394-amino-acid chain: Cell division protein FtsZ (394 aa).

Residues 21 to 25 (GGGNN), arginine 29, 108 to 110 (GTG), glutamate 139, arginine 143, asparagine 166, and aspartate 187 contribute to the GTP site. The tract at residues 317–394 (DKPSSQGRKA…EERRSRRTRR (78 aa)) is disordered. Low complexity-rich tracts occupy residues 328–346 (STGF…SGAS) and 353–364 (SAHTSHSQSSES). Basic and acidic residues predominate over residues 365–388 (VSERSHTTKDDDIPSFIRNREERR).

Belongs to the FtsZ family. As to quaternary structure, homodimer. Polymerizes to form a dynamic ring structure in a strictly GTP-dependent manner. Interacts directly with several other division proteins.

The protein localises to the cytoplasm. Functionally, essential cell division protein that forms a contractile ring structure (Z ring) at the future cell division site. The regulation of the ring assembly controls the timing and the location of cell division. One of the functions of the FtsZ ring is to recruit other cell division proteins to the septum to produce a new cell wall between the dividing cells. Binds GTP and shows GTPase activity. This is Cell division protein FtsZ from Staphylococcus epidermidis (strain ATCC 35984 / DSM 28319 / BCRC 17069 / CCUG 31568 / BM 3577 / RP62A).